The primary structure comprises 428 residues: Putative zinc metalloprotease SACOL1281 (428 aa).

Residue His21 coordinates Zn(2+). The active site involves Glu22. His25 contacts Zn(2+). 4 helical membrane passes run Phe172–Ala194, Gly309–Phe331, Ile352–Ile374, and Thr401–Trp420. Residues Ala186–Lys269 form the PDZ domain.

Belongs to the peptidase M50B family. Zn(2+) serves as cofactor.

The protein localises to the cell membrane. In Staphylococcus aureus (strain COL), this protein is Putative zinc metalloprotease SACOL1281.